The primary structure comprises 243 residues: UDP-2,3-diacylglucosamine hydrolase (243 aa).

Mn(2+)-binding residues include aspartate 8, histidine 10, aspartate 41, asparagine 79, and histidine 114. 79-80 (NR) provides a ligand contact to substrate. Residues aspartate 122, lysine 164, lysine 167, and histidine 195 each contribute to the substrate site. Mn(2+) contacts are provided by histidine 195 and histidine 197.

The protein belongs to the LpxH family. It depends on Mn(2+) as a cofactor.

It localises to the cell inner membrane. It carries out the reaction UDP-2-N,3-O-bis[(3R)-3-hydroxytetradecanoyl]-alpha-D-glucosamine + H2O = 2-N,3-O-bis[(3R)-3-hydroxytetradecanoyl]-alpha-D-glucosaminyl 1-phosphate + UMP + 2 H(+). Its pathway is glycolipid biosynthesis; lipid IV(A) biosynthesis; lipid IV(A) from (3R)-3-hydroxytetradecanoyl-[acyl-carrier-protein] and UDP-N-acetyl-alpha-D-glucosamine: step 4/6. Functionally, hydrolyzes the pyrophosphate bond of UDP-2,3-diacylglucosamine to yield 2,3-diacylglucosamine 1-phosphate (lipid X) and UMP by catalyzing the attack of water at the alpha-P atom. Involved in the biosynthesis of lipid A, a phosphorylated glycolipid that anchors the lipopolysaccharide to the outer membrane of the cell. The protein is UDP-2,3-diacylglucosamine hydrolase of Vibrio vulnificus (strain YJ016).